Consider the following 332-residue polypeptide: CXADR-like membrane protein (332 aa).

Positions 1-19 are cleaved as a signal peptide; sequence MHTLIRSFLGLWYVLGALA. Ig-like C2-type domains lie at 20–123 and 130–220; these read QTEI…SFIT and PSEL…VDVT. The Extracellular segment spans residues 20 to 231; that stretch reads QTEIKLVADE…QSVSNTGILA (212 aa). Disulfide bonds link C35/C109 and C151/C204. N-linked (GlcNAc...) asparagine glycosylation is present at N193. A helical membrane pass occupies residues 232–252; that stretch reads GVACGVVVGVFLIFFTVWLLF. Residues 253 to 332 lie on the Cytoplasmic side of the membrane; that stretch reads HKKEFKKREE…EQRHHCLEKI (80 aa). The tract at residues 276–332 is disordered; it reads PKARLVKPGSSSSDSRSSQSGSSSTRSTTNSASRSQRTHSTQETPHGEQRHHCLEKI. Residues 285–310 are compositionally biased toward low complexity; it reads SSSSDSRSSQSGSSSTRSTTNSASRS. A compositionally biased stretch (basic and acidic residues) spans 320–332; sequence PHGEQRHHCLEKI.

The protein resides in the cell junction. It localises to the tight junction. It is found in the cell membrane. The sequence is that of CXADR-like membrane protein (clmp) from Xenopus tropicalis (Western clawed frog).